A 151-amino-acid chain; its full sequence is MRKYFLGEEFTKQDLKQMNPLVLAYIGDAVYEIFIRTYIISKNKDTCVNKLHKKTIQFVKADAQSYFIREIQKYLNEEEIKVFKRGRNTKSNTSAKNASIQDYRMATGFETVIGYLYLLNEDERLEEIMKLVINLYEESSQNEGENHGSKS.

Residue Asp-28 is part of the active site.

It belongs to the MrnC RNase family. As to quaternary structure, homodimer. Mg(2+) serves as cofactor.

Its subcellular location is the cytoplasm. Involved in correct processing of both the 5' and 3' ends of 23S rRNA precursor. Processes 30S rRNA precursor transcript even in absence of ribonuclease 3 (Rnc); Rnc processes 30S rRNA into smaller rRNA precursors. In Clostridium tetani (strain Massachusetts / E88), this protein is Mini-ribonuclease 3.